Here is a 269-residue protein sequence, read N- to C-terminus: Type III pantothenate kinase (269 aa).

ATP is bound at residue 9-16 (DVGNTSVK). Substrate is bound by residues Tyr-106 and 113 to 116 (GADR). Asp-115 acts as the Proton acceptor in catalysis. K(+) is bound at residue Asp-137. Thr-140 is a binding site for ATP. Thr-193 is a substrate binding site.

This sequence belongs to the type III pantothenate kinase family. In terms of assembly, homodimer. Requires NH4(+) as cofactor. K(+) serves as cofactor.

Its subcellular location is the cytoplasm. The catalysed reaction is (R)-pantothenate + ATP = (R)-4'-phosphopantothenate + ADP + H(+). It functions in the pathway cofactor biosynthesis; coenzyme A biosynthesis; CoA from (R)-pantothenate: step 1/5. Catalyzes the phosphorylation of pantothenate (Pan), the first step in CoA biosynthesis. In Lawsonia intracellularis (strain PHE/MN1-00), this protein is Type III pantothenate kinase.